A 346-amino-acid chain; its full sequence is PhoH-like protein (346 aa).

142 to 149 (GPAGTGKT) is a binding site for ATP.

The protein belongs to the PhoH family.

The protein resides in the cytoplasm. The chain is PhoH-like protein (ybeZ) from Escherichia coli O157:H7.